The primary structure comprises 459 residues: Argininosuccinate lyase (459 aa).

The protein belongs to the lyase 1 family. Argininosuccinate lyase subfamily.

It is found in the cytoplasm. The catalysed reaction is 2-(N(omega)-L-arginino)succinate = fumarate + L-arginine. It participates in amino-acid biosynthesis; L-arginine biosynthesis; L-arginine from L-ornithine and carbamoyl phosphate: step 3/3. In Ruminiclostridium cellulolyticum (strain ATCC 35319 / DSM 5812 / JCM 6584 / H10) (Clostridium cellulolyticum), this protein is Argininosuccinate lyase.